Here is a 213-residue protein sequence, read N- to C-terminus: Peroxynitrite isomerase 2 (213 aa).

The GXWXGXG motif lies at glycine 58–glycine 64. The heme b site is built by lysine 176 and histidine 203.

Belongs to the nitrobindin family. Homodimer. The cofactor is heme b.

It carries out the reaction peroxynitrite = nitrate. Its pathway is nitrogen metabolism. Functionally, heme-binding protein able to scavenge peroxynitrite and to protect free L-tyrosine against peroxynitrite-mediated nitration, by acting as a peroxynitrite isomerase that converts peroxynitrite to nitrate. Therefore, this protein likely plays a role in peroxynitrite sensing and in the detoxification of reactive nitrogen and oxygen species (RNS and ROS, respectively). Is able to bind nitric oxide (NO) in vitro, but may act as a sensor of peroxynitrite levels in vivo. This is Peroxynitrite isomerase 2 from Rhodococcus jostii (strain RHA1).